The sequence spans 290 residues: 1D-myo-inositol 2-acetamido-2-deoxy-alpha-D-glucopyranoside deacetylase (290 aa).

Positions 15, 18, and 149 each coordinate Zn(2+).

It belongs to the MshB deacetylase family. Zn(2+) is required as a cofactor.

It catalyses the reaction 1D-myo-inositol 2-acetamido-2-deoxy-alpha-D-glucopyranoside + H2O = 1D-myo-inositol 2-amino-2-deoxy-alpha-D-glucopyranoside + acetate. Its function is as follows. Catalyzes the deacetylation of 1D-myo-inositol 2-acetamido-2-deoxy-alpha-D-glucopyranoside (GlcNAc-Ins) in the mycothiol biosynthesis pathway. In Mycolicibacterium smegmatis (strain ATCC 700084 / mc(2)155) (Mycobacterium smegmatis), this protein is 1D-myo-inositol 2-acetamido-2-deoxy-alpha-D-glucopyranoside deacetylase (mshB).